The chain runs to 364 residues: Peptide chain release factor 1 (364 aa).

An N5-methylglutamine modification is found at Q237.

The protein belongs to the prokaryotic/mitochondrial release factor family. In terms of processing, methylated by PrmC. Methylation increases the termination efficiency of RF1.

The protein resides in the cytoplasm. Its function is as follows. Peptide chain release factor 1 directs the termination of translation in response to the peptide chain termination codons UAG and UAA. The sequence is that of Peptide chain release factor 1 from Rubrobacter xylanophilus (strain DSM 9941 / JCM 11954 / NBRC 16129 / PRD-1).